The following is a 445-amino-acid chain: Probable carboxypeptidase UREG_07869 (445 aa).

The signal sequence occupies residues 1–17 (MKSLILTTLALLPLVSC). Asp-165 contacts Zn(2+). The active-site Proton acceptor is the Glu-197. Glu-198 provides a ligand contact to Zn(2+).

Belongs to the peptidase M20A family. It depends on Zn(2+) as a cofactor.

It is found in the secreted. The protein is Probable carboxypeptidase UREG_07869 of Uncinocarpus reesii (strain UAMH 1704).